A 299-amino-acid polypeptide reads, in one-letter code: Taste receptor type 2 member 5 (299 aa).

Residue Met1 is a topological domain, extracellular. A helical membrane pass occupies residues 2–22 (LSAGLGLLMLVAVVEFLIGLI). The Cytoplasmic portion of the chain corresponds to 23–45 (GNGVLVVWSFREWIRKFSWSSYN). The chain crosses the membrane as a helical span at residues 46 to 66 (LIILGLAGCRFVLQWLIILDL). The Extracellular portion of the chain corresponds to 67–82 (SLFPLFQSSRWLRYLS). A helical membrane pass occupies residues 83–103 (IFWVLVSQASLWFATFLSVFY). Over 104 to 127 (CKKITTFDHPAYLWLKQRAYNLSL) the chain is Cytoplasmic. The helical transmembrane segment at 128–148 (WCLLGYFIINLLLTVQIGLMF) threads the bilayer. Over 149-175 (YHPPQGNSSIRYPFESWQYLYAFRLNS) the chain is Extracellular. Asn155 carries N-linked (GlcNAc...) asparagine glycosylation. Residues 176–196 (GSYLPLMVFLVSSGMLIVSLY) traverse the membrane as a helical segment. Topologically, residues 197-223 (THHKKMKVHSAGRRDVRAKAHITALKS) are cytoplasmic. The helical transmembrane segment at 224 to 244 (LGCFLLLHLVYIMASPFSIAS) threads the bilayer. The Extracellular portion of the chain corresponds to 245-253 (KTYPPDLTS). A helical transmembrane segment spans residues 254 to 274 (VFIWETLMAAYPSLHSLILIM). Residues 275–299 (GIPRVKQTCQKILWKTVCARRCWGP) lie on the Cytoplasmic side of the membrane.

Belongs to the G-protein coupled receptor T2R family.

Its subcellular location is the membrane. Receptor that may play a role in the perception of bitterness and is gustducin-linked. May play a role in sensing the chemical composition of the gastrointestinal content. The activity of this receptor may stimulate alpha gustducin, mediate PLC-beta-2 activation and lead to the gating of TRPM5. The chain is Taste receptor type 2 member 5 (TAS2R5) from Pan paniscus (Pygmy chimpanzee).